Reading from the N-terminus, the 419-residue chain is MAARRTHERDPIYKIKGLAKDMLDGVFDDLVEKNVLNGDELLKIGESASFILNKAENLVENFLEKTDMAGKIFAGHIANSQEQLSLQFSNDEDDGPQKICTPSSPSESKRKVEDDEMEVNAGLAHESHLMLTAPHGLQSSEVQDTLKLCPRDQFCKIKTERAKEIYPVMEKEGRTRLALIICNKKFDYLFDRDNADTDILNMQELLENLGYSVVLKENLTAQEMETELMQFAGRPEHQSSDSTFLVFMSHGILEGICGVKHRNKKPDVLHDDTIFKIFNNSNCRSLRNKPKILIMQACRGRYNGTIWVSTNKGIATADTDEERVLSCKWNNSITKAHVETDFIAFKSSTPHNISWKVGKTGSLFISKLIDCFKKYCWCYHLEEIFRKVQHSFEVPGELTQMPTIERVSMTRYFYLFPGN.

A CARD domain is found at 1–92 (MAARRTHERD…QLSLQFSNDE (92 aa)). Ser85 carries the post-translational modification Phosphoserine. A disordered region spans residues 88–113 (FSNDEDDGPQKICTPSSPSESKRKVE). Residues His250 and Cys298 contribute to the active site.

This sequence belongs to the peptidase C14A family. In terms of assembly, heterotetramer that consists of two anti-parallel arranged heterodimers, each one formed by two subunits (Potential). Interacts with TRAF2 under resting conditions; this interaction is reduced in ER stress conditions. Mainly expressed in skeletal muscle and lung.

Functionally, involved in the activation cascade of caspases responsible for apoptosis execution. The sequence is that of Caspase-12 (Casp12) from Mus musculus (Mouse).